The chain runs to 321 residues: Phospho-N-acetylmuramoyl-pentapeptide-transferase (321 aa).

10 consecutive transmembrane segments (helical) span residues 1 to 21, 49 to 69, 77 to 97, 112 to 132, 140 to 160, 176 to 196, 200 to 220, 225 to 245, 250 to 270, and 300 to 320; these read MIYV…PILI, TMGG…AIIF, ILLL…DYII, FLAQ…FNMI, IPFT…IVFW, GLAT…SFML, AVGT…IYNV, VFMG…VSIM, ISLI…ILQV, and VVSV…WIGV.

Belongs to the glycosyltransferase 4 family. MraY subfamily. The cofactor is Mg(2+).

It is found in the cell membrane. The enzyme catalyses UDP-N-acetyl-alpha-D-muramoyl-L-alanyl-gamma-D-glutamyl-L-lysyl-D-alanyl-D-alanine + di-trans,octa-cis-undecaprenyl phosphate = Mur2Ac(oyl-L-Ala-gamma-D-Glu-L-Lys-D-Ala-D-Ala)-di-trans,octa-cis-undecaprenyl diphosphate + UMP. It participates in cell wall biogenesis; peptidoglycan biosynthesis. Functionally, catalyzes the initial step of the lipid cycle reactions in the biosynthesis of the cell wall peptidoglycan: transfers peptidoglycan precursor phospho-MurNAc-pentapeptide from UDP-MurNAc-pentapeptide onto the lipid carrier undecaprenyl phosphate, yielding undecaprenyl-pyrophosphoryl-MurNAc-pentapeptide, known as lipid I. The sequence is that of Phospho-N-acetylmuramoyl-pentapeptide-transferase from Staphylococcus carnosus (strain TM300).